The sequence spans 300 residues: Energy-coupling factor transporter ATP-binding protein EcfA2 (300 aa).

Positions 3–258 (IKAKNIVKIY…NKFLIENKML (256 aa)) constitute an ABC transporter domain. An ATP-binding site is contributed by 40–47 (GQTGSGKT).

The protein belongs to the ABC transporter superfamily. Energy-coupling factor EcfA family. As to quaternary structure, forms a stable energy-coupling factor (ECF) transporter complex composed of 2 membrane-embedded substrate-binding proteins (S component), 2 ATP-binding proteins (A component) and 2 transmembrane proteins (T component).

It localises to the cell membrane. Its function is as follows. ATP-binding (A) component of a common energy-coupling factor (ECF) ABC-transporter complex. Unlike classic ABC transporters this ECF transporter provides the energy necessary to transport a number of different substrates. This is Energy-coupling factor transporter ATP-binding protein EcfA2 from Mesomycoplasma hyopneumoniae (strain 7448) (Mycoplasma hyopneumoniae).